The following is a 656-amino-acid chain: Putative L-type lectin-domain containing receptor kinase V.2 (656 aa).

Residues 1–23 form the signal peptide; sequence MSLLLKMLLFSLFFFYMASISQC. The Extracellular segment spans residues 24-276; the sequence is SDPTGGQFSF…EDQERSLSSK (253 aa). Residues 29-248 form a legume-lectin like region; it reads GQFSFNGYLY…SHYILGWSFN (220 aa). 5 N-linked (GlcNAc...) asparagine glycosylation sites follow: Asn78, Asn124, Asn159, Asn190, and Asn257. Residues 277–297 form a helical membrane-spanning segment; that stretch reads ILAISLSISGVTLVIVLILGV. Residues 298 to 656 lie on the Cytoplasmic side of the membrane; sequence MLFLKRKKFL…MTESFLSSGR (359 aa). Residues 334–615 enclose the Protein kinase domain; sequence FKNSEVLGKG…GVATLPHNLL (282 aa). ATP-binding positions include 340-348 and Lys363; that span reads LGKGGFGKV. Residue Asp459 is the Proton acceptor of the active site.

The protein in the C-terminal section; belongs to the protein kinase superfamily. Ser/Thr protein kinase family. This sequence in the N-terminal section; belongs to the leguminous lectin family.

Its subcellular location is the cell membrane. The enzyme catalyses L-seryl-[protein] + ATP = O-phospho-L-seryl-[protein] + ADP + H(+). It carries out the reaction L-threonyl-[protein] + ATP = O-phospho-L-threonyl-[protein] + ADP + H(+). In Arabidopsis thaliana (Mouse-ear cress), this protein is Putative L-type lectin-domain containing receptor kinase V.2 (LECRK52).